A 270-amino-acid polypeptide reads, in one-letter code: Orotidine 5'-phosphate decarboxylase (270 aa).

K95 acts as the Proton donor in catalysis.

Belongs to the OMP decarboxylase family. Type 2 subfamily.

It catalyses the reaction orotidine 5'-phosphate + H(+) = UMP + CO2. The protein operates within pyrimidine metabolism; UMP biosynthesis via de novo pathway; UMP from orotate: step 2/2. In Dechloromonas aromatica (strain RCB), this protein is Orotidine 5'-phosphate decarboxylase.